The following is a 115-amino-acid chain: Yop proteins translocation protein M (115 aa).

Positions 19–38 are disordered; it reads HGGQAGRLTETNPLTENSHQ. The span at 27-38 shows a compositional bias: polar residues; sequence TETNPLTENSHQ.

Its function is as follows. Belongs to an operon involved in the translocation of Yop proteins across the bacterial membranes or in the specific control of this function. The sequence is that of Yop proteins translocation protein M (yscM) from Yersinia pestis.